We begin with the raw amino-acid sequence, 281 residues long: NADPH-dependent 7-cyano-7-deazaguanine reductase (281 aa).

Residue 88 to 90 coordinates substrate; the sequence is VES. 90-91 provides a ligand contact to NADPH; sequence SK. The active-site Thioimide intermediate is cysteine 189. The active-site Proton donor is the aspartate 196. 228-229 lines the substrate pocket; the sequence is HE. 257–258 serves as a coordination point for NADPH; it reads RG.

The protein belongs to the GTP cyclohydrolase I family. QueF type 2 subfamily. Homodimer.

The protein resides in the cytoplasm. The catalysed reaction is 7-aminomethyl-7-carbaguanine + 2 NADP(+) = 7-cyano-7-deazaguanine + 2 NADPH + 3 H(+). It functions in the pathway tRNA modification; tRNA-queuosine biosynthesis. Functionally, catalyzes the NADPH-dependent reduction of 7-cyano-7-deazaguanine (preQ0) to 7-aminomethyl-7-deazaguanine (preQ1). In Klebsiella pneumoniae (strain 342), this protein is NADPH-dependent 7-cyano-7-deazaguanine reductase.